The following is a 108-amino-acid chain: MVVKSALLFVLAAILEIGGAWLVWQGVREHRGLTWVGAGVIALGAYGFVAAFQPDAHFGRVLAAYGGVFVAGSLLWGVVADGFRPDRWDITGAAVCLAGVGLIMYAPR.

Transmembrane regions (helical) follow at residues 7–27 (LLFV…WQGV), 32–52 (GLTW…VAAF), 61–81 (VLAA…VVAD), and 87–107 (RWDI…MYAP).

This sequence belongs to the UPF0060 family.

Its subcellular location is the cell membrane. The chain is UPF0060 membrane protein Mvan_3406 from Mycolicibacterium vanbaalenii (strain DSM 7251 / JCM 13017 / BCRC 16820 / KCTC 9966 / NRRL B-24157 / PYR-1) (Mycobacterium vanbaalenii).